The chain runs to 406 residues: Tryptophan synthase beta chain (406 aa).

Lys97 carries the post-translational modification N6-(pyridoxal phosphate)lysine.

This sequence belongs to the TrpB family. In terms of assembly, tetramer of two alpha and two beta chains. Pyridoxal 5'-phosphate is required as a cofactor.

It catalyses the reaction (1S,2R)-1-C-(indol-3-yl)glycerol 3-phosphate + L-serine = D-glyceraldehyde 3-phosphate + L-tryptophan + H2O. The protein operates within amino-acid biosynthesis; L-tryptophan biosynthesis; L-tryptophan from chorismate: step 5/5. Its function is as follows. The beta subunit is responsible for the synthesis of L-tryptophan from indole and L-serine. The chain is Tryptophan synthase beta chain from Lacticaseibacillus paracasei (strain ATCC 334 / BCRC 17002 / CCUG 31169 / CIP 107868 / KCTC 3260 / NRRL B-441) (Lactobacillus paracasei).